A 108-amino-acid chain; its full sequence is Small ribosomal subunit protein eS25x (108 aa).

The interval 1 to 36 (MAPKKDKVPPPSSKPAKSGGGKQKKKKWSKGKQKEK) is disordered. Over residues 22 to 31 (KQKKKKWSKG) the composition is skewed to basic residues.

The protein belongs to the eukaryotic ribosomal protein eS25 family.

The sequence is that of Small ribosomal subunit protein eS25x (RPS25D) from Arabidopsis thaliana (Mouse-ear cress).